A 324-amino-acid chain; its full sequence is Phospho-N-acetylmuramoyl-pentapeptide-transferase (324 aa).

10 helical membrane passes run 9-29 (TFAV…PFLV), 53-73 (TMGA…FSFI), 77-97 (VSAA…LGFL), 117-137 (FLGQ…NGFA), 147-167 (IEVD…VGFS), 176-196 (LDGL…VIAF), 201-221 (MDVA…LLFN), 227-247 (IFMG…ISIL), 253-273 (LLLL…LQVF), and 304-324 (VLTF…VVIF).

This sequence belongs to the glycosyltransferase 4 family. MraY subfamily. Requires Mg(2+) as cofactor.

The protein resides in the cell membrane. The enzyme catalyses UDP-N-acetyl-alpha-D-muramoyl-L-alanyl-gamma-D-glutamyl-meso-2,6-diaminopimeloyl-D-alanyl-D-alanine + di-trans,octa-cis-undecaprenyl phosphate = di-trans,octa-cis-undecaprenyl diphospho-N-acetyl-alpha-D-muramoyl-L-alanyl-D-glutamyl-meso-2,6-diaminopimeloyl-D-alanyl-D-alanine + UMP. The protein operates within cell wall biogenesis; peptidoglycan biosynthesis. In terms of biological role, catalyzes the initial step of the lipid cycle reactions in the biosynthesis of the cell wall peptidoglycan: transfers peptidoglycan precursor phospho-MurNAc-pentapeptide from UDP-MurNAc-pentapeptide onto the lipid carrier undecaprenyl phosphate, yielding undecaprenyl-pyrophosphoryl-MurNAc-pentapeptide, known as lipid I. In Listeria monocytogenes serotype 4b (strain CLIP80459), this protein is Phospho-N-acetylmuramoyl-pentapeptide-transferase.